A 420-amino-acid chain; its full sequence is Signal recognition particle receptor FtsY (420 aa).

Basic and acidic residues predominate over residues Asp-28–Lys-62. Residues Asp-28 to Arg-118 form a disordered region. Positions Ala-63–Pro-104 are enriched in low complexity. Residues Gly-227 to Thr-234, Asp-310 to Arg-314, and Ser-372 to Asp-375 contribute to the GTP site.

This sequence belongs to the GTP-binding SRP family. FtsY subfamily. Part of the signal recognition particle protein translocation system, which is composed of SRP and FtsY.

It is found in the cell membrane. The protein localises to the cytoplasm. The enzyme catalyses GTP + H2O = GDP + phosphate + H(+). Its function is as follows. Involved in targeting and insertion of nascent membrane proteins into the cytoplasmic membrane. Acts as a receptor for the complex formed by the signal recognition particle (SRP) and the ribosome-nascent chain (RNC). The sequence is that of Signal recognition particle receptor FtsY from Bifidobacterium longum (strain NCC 2705).